Reading from the N-terminus, the 246-residue chain is UDP-N-acetyl-D-mannosaminuronic acid transferase (246 aa).

It belongs to the glycosyltransferase 26 family.

The catalysed reaction is UDP-N-acetyl-alpha-D-mannosaminouronate + N-acetyl-alpha-D-glucosaminyl-di-trans,octa-cis-undecaprenyl diphosphate = beta-D-ManNAcA-(1-&gt;4)-alpha-D-GlcNAc-di-trans,octa-cis-undecaprenyl diphosphate + UDP + H(+). The protein operates within bacterial outer membrane biogenesis; enterobacterial common antigen biosynthesis. In terms of biological role, catalyzes the synthesis of Und-PP-GlcNAc-ManNAcA (Lipid II), the second lipid-linked intermediate involved in enterobacterial common antigen (ECA) synthesis. The sequence is that of UDP-N-acetyl-D-mannosaminuronic acid transferase from Yersinia pseudotuberculosis serotype IB (strain PB1/+).